The chain runs to 364 residues: Fructose-bisphosphate aldolase A (364 aa).

Residue Tyr-5 is modified to Phosphotyrosine. Thr-9 carries the post-translational modification Phosphothreonine. 2 positions are modified to phosphoserine: Ser-36 and Ser-39. Lys-42 bears the N6-acetyllysine; alternate mark. Lys-42 participates in a covalent cross-link: Glycyl lysine isopeptide (Lys-Gly) (interchain with G-Cter in SUMO1); alternate. Lys-42 is covalently cross-linked (Glycyl lysine isopeptide (Lys-Gly) (interchain with G-Cter in SUMO2); alternate). Arg-43 contacts beta-D-fructose 1,6-bisphosphate. Ser-46 carries the phosphoserine modification. Lys-99 bears the N6-(2-hydroxyisobutyryl)lysine mark. N6-acetyllysine is present on Lys-108. Lys-111 carries the N6-acetyllysine; alternate modification. The residue at position 111 (Lys-111) is an N6-malonyllysine; alternate. The residue at position 132 (Ser-132) is a Phosphoserine. N6-(2-hydroxyisobutyryl)lysine is present on Lys-147. Glu-188 serves as the catalytic Proton acceptor. Catalysis depends on Lys-230, which acts as the Schiff-base intermediate with dihydroxyacetone-P. Residue Ser-272 is modified to Phosphoserine. Residues 272 to 274, Ser-301, and Arg-304 contribute to the beta-D-fructose 1,6-bisphosphate site; that span reads SGG. The residue at position 312 (Lys-312) is an N6-malonyllysine. At Lys-330 the chain carries N6-acetyllysine.

It belongs to the class I fructose-bisphosphate aldolase family. In terms of assembly, homotetramer. Interacts with SNX9 and WAS. Interacts with FBP2; the interaction blocks FBP2 inhibition by physiological concentrations of AMP and reduces inhibition by Ca(2+). Expressed in muscle, brain and hepatoma cells.

Its subcellular location is the cytoplasm. It is found in the myofibril. The protein localises to the sarcomere. The protein resides in the i band. It localises to the m line. The enzyme catalyses beta-D-fructose 1,6-bisphosphate = D-glyceraldehyde 3-phosphate + dihydroxyacetone phosphate. The protein operates within carbohydrate degradation; glycolysis; D-glyceraldehyde 3-phosphate and glycerone phosphate from D-glucose: step 4/4. Functionally, catalyzes the reversible conversion of beta-D-fructose 1,6-bisphosphate (FBP) into two triose phosphate and plays a key role in glycolysis and gluconeogenesis. In addition, may also function as scaffolding protein. This is Fructose-bisphosphate aldolase A (Aldoa) from Rattus norvegicus (Rat).